Here is a 159-residue protein sequence, read N- to C-terminus: Eukaryotic translation initiation factor 5A (159 aa).

Position 51 is a hypusine (lysine 51).

Belongs to the eIF-5A family. In terms of processing, lys-51 undergoes hypusination, a unique post-translational modification that consists in the addition of a butylamino group from spermidine to lysine side chain, leading to the formation of the unusual amino acid hypusine. eIF-5As are the only known proteins to undergo this modification, which is essential for their function.

Its subcellular location is the cytoplasm. Functionally, translation factor that promotes translation elongation and termination, particularly upon ribosome stalling at specific amino acid sequence contexts. Binds between the exit (E) and peptidyl (P) site of the ribosome and promotes rescue of stalled ribosome: specifically required for efficient translation of polyproline-containing peptides as well as other motifs that stall the ribosome. Acts as a ribosome quality control (RQC) cofactor by joining the RQC complex to facilitate peptidyl transfer during CAT tailing step. Functions as a regulator of autophagy. The chain is Eukaryotic translation initiation factor 5A from Drosophila melanogaster (Fruit fly).